The sequence spans 356 residues: Methylthioribose-1-phosphate isomerase (356 aa).

Residues 53–55, Arg97, and Gln203 each bind substrate; that span reads RGA. Asp244 (proton donor) is an active-site residue. 254-255 is a substrate binding site; sequence NK.

This sequence belongs to the eIF-2B alpha/beta/delta subunits family. MtnA subfamily.

The enzyme catalyses 5-(methylsulfanyl)-alpha-D-ribose 1-phosphate = 5-(methylsulfanyl)-D-ribulose 1-phosphate. Its pathway is amino-acid biosynthesis; L-methionine biosynthesis via salvage pathway; L-methionine from S-methyl-5-thio-alpha-D-ribose 1-phosphate: step 1/6. Its function is as follows. Catalyzes the interconversion of methylthioribose-1-phosphate (MTR-1-P) into methylthioribulose-1-phosphate (MTRu-1-P). This is Methylthioribose-1-phosphate isomerase from Rhodopirellula baltica (strain DSM 10527 / NCIMB 13988 / SH1).